The primary structure comprises 144 residues: AP-4 complex subunit sigma-1 (144 aa).

This sequence belongs to the adaptor complexes small subunit family. Adaptor protein complex 4 (AP-4) is a heterotetramer composed of two large adaptins (epsilon-type subunit AP4E1 and beta-type subunit AP4B1), a medium adaptin (mu-type subunit AP4M1) and a small adaptin (sigma-type AP4S1).

The protein resides in the golgi apparatus. The protein localises to the trans-Golgi network membrane. In terms of biological role, component of the adaptor protein complex 4 (AP-4). Adaptor protein complexes are vesicle coat components involved both in vesicle formation and cargo selection. They control the vesicular transport of proteins in different trafficking pathways. AP-4 forms a non clathrin-associated coat on vesicles departing the trans-Golgi network (TGN) and may be involved in the targeting of proteins from the trans-Golgi network (TGN) to the endosomal-lysosomal system. It is also involved in protein sorting to the basolateral membrane in epithelial cells and the proper asymmetric localization of somatodendritic proteins in neurons. AP-4 is involved in the recognition and binding of tyrosine-based sorting signals found in the cytoplasmic part of cargos, but may also recognize other types of sorting signal. The chain is AP-4 complex subunit sigma-1 from Mus musculus (Mouse).